Here is a 354-residue protein sequence, read N- to C-terminus: Uroporphyrinogen decarboxylase (354 aa).

Residues 25–29, aspartate 75, tyrosine 152, threonine 207, and histidine 330 contribute to the substrate site; that span reads RQAGR.

Belongs to the uroporphyrinogen decarboxylase family. As to quaternary structure, homodimer.

It is found in the cytoplasm. The enzyme catalyses uroporphyrinogen III + 4 H(+) = coproporphyrinogen III + 4 CO2. Its pathway is porphyrin-containing compound metabolism; protoporphyrin-IX biosynthesis; coproporphyrinogen-III from 5-aminolevulinate: step 4/4. In terms of biological role, catalyzes the decarboxylation of four acetate groups of uroporphyrinogen-III to yield coproporphyrinogen-III. The protein is Uroporphyrinogen decarboxylase of Xanthomonas euvesicatoria pv. vesicatoria (strain 85-10) (Xanthomonas campestris pv. vesicatoria).